Here is a 118-residue protein sequence, read N- to C-terminus: Large ribosomal subunit protein uL18 (118 aa).

Belongs to the universal ribosomal protein uL18 family. As to quaternary structure, part of the 50S ribosomal subunit; part of the 5S rRNA/L5/L18/L25 subcomplex. Contacts the 5S and 23S rRNAs.

In terms of biological role, this is one of the proteins that bind and probably mediate the attachment of the 5S RNA into the large ribosomal subunit, where it forms part of the central protuberance. This is Large ribosomal subunit protein uL18 from Campylobacter lari (strain RM2100 / D67 / ATCC BAA-1060).